The primary structure comprises 152 residues: UPF0266 membrane protein YobD (152 aa).

A run of 3 helical transmembrane segments spans residues 6-26 (LVLI…QFIM), 45-65 (VDSV…VTSH), and 67-87 (AQMT…IFWI).

This sequence belongs to the UPF0266 family.

It is found in the cell inner membrane. The sequence is that of UPF0266 membrane protein YobD from Salmonella arizonae (strain ATCC BAA-731 / CDC346-86 / RSK2980).